The primary structure comprises 519 residues: tRNA pseudouridine synthase Pus10 (519 aa).

Positions 70 to 98 (NENEEIDENTKNNEDTENKADDKSQSNEE) are disordered. Over residues 77-98 (ENTKNNEDTENKADDKSQSNEE) the composition is skewed to basic and acidic residues. The 122-residue stretch at 144–265 (NESEENESNI…NQKIYLQINP (122 aa)) folds into the THUMP domain. The active-site Nucleophile is Asp-334. The substrate site is built by Tyr-398 and Tyr-476.

Belongs to the pseudouridine synthase Pus10 family.

It catalyses the reaction uridine(54) in tRNA = pseudouridine(54) in tRNA. It carries out the reaction uridine(55) in tRNA = pseudouridine(55) in tRNA. In terms of biological role, responsible for synthesis of pseudouridine from uracil-54 and uracil-55 in the psi GC loop of transfer RNAs. This chain is tRNA pseudouridine synthase Pus10, found in Methanococcus voltae (strain ATCC BAA-1334 / A3).